The chain runs to 629 residues: DNA topoisomerase 4 subunit B (629 aa).

ATP contacts are provided by residues tyrosine 4, asparagine 41, aspartate 68, 109 to 115 (GLHGVGI), and lysine 333. The region spanning 411–524 (AELFLVEGDS…AGHVYVAMPP (114 aa)) is the Toprim domain. 3 residues coordinate Mg(2+): glutamate 417, aspartate 489, and aspartate 491.

It belongs to the type II topoisomerase family. ParE type 1 subfamily. In terms of assembly, heterotetramer composed of ParC and ParE. It depends on Mg(2+) as a cofactor. Mn(2+) serves as cofactor. Ca(2+) is required as a cofactor.

It carries out the reaction ATP-dependent breakage, passage and rejoining of double-stranded DNA.. Topoisomerase IV is essential for chromosome segregation. It relaxes supercoiled DNA. Performs the decatenation events required during the replication of a circular DNA molecule. In Pseudomonas aeruginosa (strain ATCC 15692 / DSM 22644 / CIP 104116 / JCM 14847 / LMG 12228 / 1C / PRS 101 / PAO1), this protein is DNA topoisomerase 4 subunit B.